We begin with the raw amino-acid sequence, 489 residues long: Dipeptide and tripeptide permease B (489 aa).

The Cytoplasmic segment spans residues 1–27 (MNTTAPTGLLQQPRPFFMIFFVELWER). Residues 28–48 (FGYYGVQGILAVFFVKQLGFS) form a helical membrane-spanning segment. At 49 to 52 (QEQA) the chain is on the periplasmic side. The helical transmembrane segment at 53 to 73 (FITFGAFAALVYGLISIGGYV) threads the bilayer. Topologically, residues 74-82 (GDHLLGTKR) are cytoplasmic. Residues 83–103 (TLVLGAIVLAIGYFMTGMSLL) traverse the membrane as a helical segment. Over 104–106 (NPD) the chain is Periplasmic. The helical transmembrane segment at 107-127 (LIFIALGTIAVGNGLFKANPA) threads the bilayer. Residues 128 to 146 (SLLSKCYQPKDPRLDGAFT) lie on the Cytoplasmic side of the membrane. Residues 147 to 167 (LFYMSINIGSLLSLSLAPVIA) traverse the membrane as a helical segment. Residues 168–172 (DKFGY) are Periplasmic-facing. The chain crosses the membrane as a helical span at residues 173–193 (AVTYNLCGAGLIVALLVYFAC). Residues 194–214 (RGMVKNIGSEPDHKPLRFRNL) are Cytoplasmic-facing. The chain crosses the membrane as a helical span at residues 215 to 235 (LLVLLGTVVMIFLCAWLMHNV). A topological domain (periplasmic) is located at residue Lys236. The chain crosses the membrane as a helical span at residues 237–257 (IANLVLIVLSIVVTIFFFREA). The Cytoplasmic segment spans residues 258 to 267 (FRLDKTGRNK). Residues 268-288 (MFVAFILMIEAVLFYILYAQM) form a helical membrane-spanning segment. The Periplasmic portion of the chain corresponds to 289 to 315 (PTSLNFFAINNVHHEILGFAINPVSFQ). Residues 316-338 (ALNPFWVVVASPVLAAIYTRLGS) traverse the membrane as a helical segment. At 339–348 (KGKDLTMPMK) the chain is on the cytoplasmic side. Residues 349–369 (FTLGMFLCALGFLTAAAGMWF) form a helical membrane-spanning segment. Residues 370 to 379 (ADAQGLTSPW) lie on the Periplasmic side of the membrane. Residues 380 to 400 (FIVLVYLFQSLGELLISALGL) form a helical membrane-spanning segment. Residues 401–410 (AMVAALVPQH) lie on the Cytoplasmic side of the membrane. Residues 411 to 431 (LMGFILGMWFLTQAAAFLLGG) traverse the membrane as a helical segment. Topologically, residues 432–454 (YVATFTAVPENITDPLQTLPIYT) are periplasmic. Residues 455-475 (GVFSKIGLVTLAVTVVMAIMV) traverse the membrane as a helical segment. The Cytoplasmic segment spans residues 476–489 (PWLNRMINTPGTEQ).

The protein belongs to the major facilitator superfamily. Proton-dependent oligopeptide transporter (POT/PTR) (TC 2.A.17) family. DtpB subfamily.

The protein resides in the cell inner membrane. Its function is as follows. Proton-dependent permease that transports di- and tripeptides. This is Dipeptide and tripeptide permease B from Salmonella typhimurium (strain LT2 / SGSC1412 / ATCC 700720).